A 466-amino-acid polypeptide reads, in one-letter code: tRNA modification GTPase MnmE (466 aa).

(6S)-5-formyl-5,6,7,8-tetrahydrofolate contacts are provided by Arg-25, Glu-82, and Lys-127. One can recognise a TrmE-type G domain in the interval 223–388; that stretch reads GIKVVIAGQP…LRRQLLQIAG (166 aa). Asn-233 contributes to the K(+) binding site. GTP contacts are provided by residues 233–238, 252–258, 277–280, 346–349, and 369–371; these read NAGKSS, TPIAGTT, DTAG, NKAD, and SAR. Mg(2+) is bound at residue Ser-237. K(+)-binding residues include Thr-252, Ile-254, and Thr-257. Thr-258 contributes to the Mg(2+) binding site. Lys-466 lines the (6S)-5-formyl-5,6,7,8-tetrahydrofolate pocket.

Belongs to the TRAFAC class TrmE-Era-EngA-EngB-Septin-like GTPase superfamily. TrmE GTPase family. In terms of assembly, homodimer. Heterotetramer of two MnmE and two MnmG subunits. Requires K(+) as cofactor.

Its subcellular location is the cytoplasm. Its function is as follows. Exhibits a very high intrinsic GTPase hydrolysis rate. Involved in the addition of a carboxymethylaminomethyl (cmnm) group at the wobble position (U34) of certain tRNAs, forming tRNA-cmnm(5)s(2)U34. The protein is tRNA modification GTPase MnmE of Acidovorax sp. (strain JS42).